Reading from the N-terminus, the 69-residue chain is Brevinin-1CG1 (69 aa).

The N-terminal stretch at 1 to 22 is a signal peptide; that stretch reads MFTMKKSLLLLFFLGTINLSLC. The propeptide at 23–43 is removed in mature form; sequence EQERNAEEERRDDDEMDVEVE. Residues C63 and C69 are joined by a disulfide bond.

In terms of tissue distribution, expressed by the skin glands.

It localises to the secreted. In terms of biological role, antimicrobial peptide. Active against Gram-positive bacteria R.rhodochrous X15 and B.licheniformis X39 and against Gram-negative bacterium E.coli ATCC 25922. Has antifungal activity against a slime mold isolate. Has weak hemolytic activity against human erythrocytes. The sequence is that of Brevinin-1CG1 from Amolops chunganensis (Chungan torrent frog).